Consider the following 365-residue polypeptide: Methionine import ATP-binding protein MetN (365 aa).

One can recognise an ABC transporter domain in the interval Val26–Leu261. Gly58–Ser65 provides a ligand contact to ATP.

This sequence belongs to the ABC transporter superfamily. Methionine importer (TC 3.A.1.24) family. The complex is composed of two ATP-binding proteins (MetN), two transmembrane proteins (MetI) and a solute-binding protein (MetQ).

It localises to the cell inner membrane. It catalyses the reaction L-methionine(out) + ATP + H2O = L-methionine(in) + ADP + phosphate + H(+). The catalysed reaction is D-methionine(out) + ATP + H2O = D-methionine(in) + ADP + phosphate + H(+). Part of the ABC transporter complex MetNIQ involved in methionine import. Responsible for energy coupling to the transport system. In Mesorhizobium japonicum (strain LMG 29417 / CECT 9101 / MAFF 303099) (Mesorhizobium loti (strain MAFF 303099)), this protein is Methionine import ATP-binding protein MetN.